Reading from the N-terminus, the 85-residue chain is Putative membrane protein insertion efficiency factor (85 aa).

Positions 62 to 85 are disordered; it reads PLGSDGYDPVPEPKDRKPPHSPAG.

The protein belongs to the UPF0161 family.

It localises to the cell inner membrane. Could be involved in insertion of integral membrane proteins into the membrane. This Ruegeria pomeroyi (strain ATCC 700808 / DSM 15171 / DSS-3) (Silicibacter pomeroyi) protein is Putative membrane protein insertion efficiency factor.